A 487-amino-acid polypeptide reads, in one-letter code: Cytochrome P450 716A75 (487 aa).

Residues 5–25 form a helical membrane-spanning segment; that stretch reads FVSLLSLFLLILLPLSLLFLF. Residue C434 participates in heme binding.

It belongs to the cytochrome P450 family. Heme serves as cofactor.

It is found in the membrane. It catalyses the reaction beta-amyrin + reduced [NADPH--hemoprotein reductase] + O2 = erythrodiol + oxidized [NADPH--hemoprotein reductase] + H2O + H(+). The catalysed reaction is erythrodiol + reduced [NADPH--hemoprotein reductase] + O2 = oleanolic aldehyde + oxidized [NADPH--hemoprotein reductase] + 2 H2O + H(+). The enzyme catalyses oleanolic aldehyde + reduced [NADPH--hemoprotein reductase] + O2 = oleanolate + oxidized [NADPH--hemoprotein reductase] + H2O + 2 H(+). Catalyzes the C-28 oxidation of beta-amyrin to form erythrodiol. Catalyzes the C-28 oxidation of erythrodiol to form oleanolic aldehyde. Catalyzes the C-28 oxidation of oleanolic aldehyde to form oleanolate. The protein is Cytochrome P450 716A75 of Maesa lanceolata (False assegai).